A 236-amino-acid polypeptide reads, in one-letter code: Syntaxin-8 (236 aa).

The Cytoplasmic portion of the chain corresponds to 1–215; sequence MAPDPWFSTY…LVDRKSASCG (215 aa). Positions 42-65 form a coiled coil; it reads LTIRTLLKNLKVKIDLLKDLLLRA. A phosphoserine mark is found at S102 and S160. Residues 145 to 207 form the t-SNARE coiled-coil homology domain; the sequence is QKIIQEQDAG…RTEARRVTLV (63 aa). Residues 216-232 traverse the membrane as a helical; Anchor for type IV membrane protein segment; the sequence is MIMVILLLLVAIVVVAV. The Vesicular segment spans residues 233–236; the sequence is WPTN.

This sequence belongs to the syntaxin family. As to quaternary structure, part of the SNARE core complex containing STX7, VAMP8 and VTI1B. Interacts with VAMP8. Forms a SNARE complex with STX7, VTI1B and VAMP8 which functions in the homotypic fusion of late endosomes. Component of the SNARE complex composed of STX7, STX8, VAMP7 and VTI1B that is required for heterotypic fusion of late endosomes with lysosomes. Interacts with HECTD3. Interacts with TPC1. Post-translationally, ubiquitinated by HECTD3. In terms of tissue distribution, widely expressed in all tissues examined.

It is found in the membrane. In terms of biological role, vesicle trafficking protein that functions in the early secretory pathway, possibly by mediating retrograde transport from cis-Golgi membranes to the ER. This Rattus norvegicus (Rat) protein is Syntaxin-8 (Stx8).